A 644-amino-acid polypeptide reads, in one-letter code: Exoribonuclease 2 (644 aa).

An RNB domain is found at 189–516 (RQDLTALNFV…NHRLLKAAIK (328 aa)). One can recognise an S1 motif domain in the interval 561–643 (DTRFAAEIID…ETRSIIARPV (83 aa)).

It belongs to the RNR ribonuclease family. RNase II subfamily.

The protein resides in the cytoplasm. It catalyses the reaction Exonucleolytic cleavage in the 3'- to 5'-direction to yield nucleoside 5'-phosphates.. Involved in mRNA degradation. Hydrolyzes single-stranded polyribonucleotides processively in the 3' to 5' direction. The polypeptide is Exoribonuclease 2 (Escherichia fergusonii (strain ATCC 35469 / DSM 13698 / CCUG 18766 / IAM 14443 / JCM 21226 / LMG 7866 / NBRC 102419 / NCTC 12128 / CDC 0568-73)).